Here is a 389-residue protein sequence, read N- to C-terminus: Vacuolar protein sorting-associated protein vts1 (389 aa).

A disordered region spans residues 149–335 (NPQRKAKTPS…RPSQPTKASP (187 aa)). Polar residues-rich tracts occupy residues 156–177 (TPSN…TLPT), 184–219 (TNAS…SSEP), and 227–282 (SLSS…PESK). Residues 294–306 (TSITTTSTSIDPS) are compositionally biased toward low complexity. Residues 308 to 334 (AFSSKSTLATTRTNAPLSRPSQPTKAS) show a composition bias toward polar residues.

It belongs to the VTA1 family. Homodimer (in cytoplasm).

The protein resides in the cytoplasm. It localises to the endosome membrane. In terms of biological role, has a role in the formation of the multivesicular body (MVB). Required for the sorting of lipids to form intralumenal vesicles and for fluid-phase transport to the vacuole. Required for sorting several plasma membrane proteins into the MVB. The sequence is that of Vacuolar protein sorting-associated protein vts1 (vts1) from Schizosaccharomyces pombe (strain 972 / ATCC 24843) (Fission yeast).